A 187-amino-acid polypeptide reads, in one-letter code: Large ribosomal subunit protein uL13 (187 aa).

Belongs to the universal ribosomal protein uL13 family. In terms of assembly, part of the 50S ribosomal subunit.

This protein is one of the early assembly proteins of the 50S ribosomal subunit, although it is not seen to bind rRNA by itself. It is important during the early stages of 50S assembly. The sequence is that of Large ribosomal subunit protein uL13 from Pyrobaculum aerophilum (strain ATCC 51768 / DSM 7523 / JCM 9630 / CIP 104966 / NBRC 100827 / IM2).